The chain runs to 160 residues: Cyclic pyranopterin monophosphate synthase (160 aa).

Substrate is bound by residues 75-77 (MCH) and 115-116 (ME). The active site involves Asp-130.

The protein belongs to the MoaC family. Homohexamer; trimer of dimers.

It catalyses the reaction (8S)-3',8-cyclo-7,8-dihydroguanosine 5'-triphosphate = cyclic pyranopterin phosphate + diphosphate. It participates in cofactor biosynthesis; molybdopterin biosynthesis. Functionally, catalyzes the conversion of (8S)-3',8-cyclo-7,8-dihydroguanosine 5'-triphosphate to cyclic pyranopterin monophosphate (cPMP). This is Cyclic pyranopterin monophosphate synthase from Lysinibacillus sphaericus (strain C3-41).